The following is a 205-amino-acid chain: NAD(P)H dehydrogenase (quinone) (205 aa).

A Flavodoxin-like domain is found at 3–194; the sequence is VLVVYYSMYG…AAARYQGKHV (192 aa). FMN-binding positions include 9–14 and 82–84; these read SMYGHI and TRF. Tyr-11 contributes to the NAD(+) binding site. Trp-102 is a substrate binding site. Residue His-138 coordinates FMN.

The protein belongs to the WrbA family. Requires FMN as cofactor.

The enzyme catalyses a quinone + NADH + H(+) = a quinol + NAD(+). The catalysed reaction is a quinone + NADPH + H(+) = a quinol + NADP(+). The polypeptide is NAD(P)H dehydrogenase (quinone) (Geotalea daltonii (strain DSM 22248 / JCM 15807 / FRC-32) (Geobacter daltonii)).